The chain runs to 697 residues: Sentrin-specific protease (697 aa).

The segment covering 1-14 has biased composition (basic and acidic residues); sequence MSRRSDLSDKDSQS. 2 disordered regions span residues 1-47 and 365-387; these read MSRR…QGLG and SEES…SDSY. The short motif at 15–19 is the Nuclear localization signal element; it reads RKRHW. Positions 462–467 match the Nuclear localization signal motif; sequence KVEKKK. Positions 501 to 664 are protease; the sequence is IQICKKDLAT…VFSCQFGEWA (164 aa). Active-site residues include H585, D602, and C653.

This sequence belongs to the peptidase C48 family.

It localises to the nucleus envelope. Functionally, protease that deconjugates smo-1 from targeted proteins and may catalyze the processing of smo-1 to its mature form. In Caenorhabditis elegans, this protein is Sentrin-specific protease (ulp-1).